The chain runs to 235 residues: Ribonuclease S-2 (235 aa).

Positions 1-31 (MATVQKSQHSHFFLLVGCIVHLSNFCSTTTA) are cleaved as a signal peptide. Gln41 contacts RNA. Cys47 and Cys54 are oxidised to a cystine. His66 is a binding site for RNA. The active-site Proton donor is His66. Asn72 carries an N-linked (GlcNAc...) asparagine glycan. 3 disulfides stabilise this stretch: Cys80/Cys129, Cys189/Cys217, and Cys200/Cys211. RNA is bound by residues 105–106 (DL), Arg108, and Phe118. The active site involves Gln122. An RNA-binding site is contributed by 125 to 126 (KH). His126 functions as the Proton acceptor in the catalytic mechanism.

Belongs to the RNase T2 family.

It localises to the secreted. The protein localises to the extracellular space. It catalyses the reaction a ribonucleotidyl-ribonucleotide-RNA + H2O = a 3'-end 3'-phospho-ribonucleotide-RNA + a 5'-end dephospho-ribonucleoside-RNA + H(+). In terms of biological role, self-incompatibility (SI) is the inherited ability of a flowering plant to prevent self-fertilization by discriminating between self and non-self pollen during pollination. In many species, self-incompatibility is controlled by the single, multiallelic locus S. The protein is Ribonuclease S-2 (S2) of Antirrhinum hispanicum (Snapdragon).